The chain runs to 340 residues: Glycerol-3-phosphate dehydrogenase [NAD(P)+] (340 aa).

Positions 14, 15, and 109 each coordinate NADPH. The sn-glycerol 3-phosphate site is built by Lys-109, Gly-140, and Ser-142. Ala-144 contributes to the NADPH binding site. Residues Lys-195, Asp-248, Ser-258, Arg-259, and Asn-260 each contribute to the sn-glycerol 3-phosphate site. Lys-195 acts as the Proton acceptor in catalysis. Arg-259 serves as a coordination point for NADPH. Positions 283 and 285 each coordinate NADPH.

The protein belongs to the NAD-dependent glycerol-3-phosphate dehydrogenase family.

It localises to the cytoplasm. The enzyme catalyses sn-glycerol 3-phosphate + NAD(+) = dihydroxyacetone phosphate + NADH + H(+). It carries out the reaction sn-glycerol 3-phosphate + NADP(+) = dihydroxyacetone phosphate + NADPH + H(+). The protein operates within membrane lipid metabolism; glycerophospholipid metabolism. Its function is as follows. Catalyzes the reduction of the glycolytic intermediate dihydroxyacetone phosphate (DHAP) to sn-glycerol 3-phosphate (G3P), the key precursor for phospholipid synthesis. The sequence is that of Glycerol-3-phosphate dehydrogenase [NAD(P)+] from Syntrophobacter fumaroxidans (strain DSM 10017 / MPOB).